Reading from the N-terminus, the 87-residue chain is Small ribosomal subunit protein bS20 (87 aa).

The segment at 1–27 is disordered; it reads MANIKSAKKRALQSEKRRQHNASRRSM.

It belongs to the bacterial ribosomal protein bS20 family.

Its function is as follows. Binds directly to 16S ribosomal RNA. This Aeromonas hydrophila subsp. hydrophila (strain ATCC 7966 / DSM 30187 / BCRC 13018 / CCUG 14551 / JCM 1027 / KCTC 2358 / NCIMB 9240 / NCTC 8049) protein is Small ribosomal subunit protein bS20.